A 559-amino-acid polypeptide reads, in one-letter code: Potassium-transporting ATPase potassium-binding subunit (559 aa).

The next 13 membrane-spanning stretches (helical) occupy residues 5–25, 27–47, 63–83, 132–152, 170–190, 253–273, 283–303, 327–347, 356–376, 379–399, 416–436, 484–504, and 524–544; these read GFLLIASFLLILLVLAKPLGS, LARLIAAVPLPGVAGVERILW, LLALLTLNLLGLGILFCLLFW, GLTVQNFLSAATGIAVVFALI, LVRITLWILFPVALIIALFFI, LAQMLAIFLIPAALCFAFGEA, LLWAMSFIFVVCVAVVMWAEV, FGVLASSLFAVVTTAASCGAV, ALGGMVPMWLMQIGEVVFGGV, GLYGMLLFVLLAVFIAGLMIG, MTALAILVTPMLVLLGSALAM, LLAFCMFVGRFGVIIPVMAIA, and GALFIGLLIGTVLLVGALTFI.

It belongs to the KdpA family. The system is composed of three essential subunits: KdpA, KdpB and KdpC.

It is found in the cell inner membrane. Part of the high-affinity ATP-driven potassium transport (or Kdp) system, which catalyzes the hydrolysis of ATP coupled with the electrogenic transport of potassium into the cytoplasm. This subunit binds the periplasmic potassium ions and delivers the ions to the membrane domain of KdpB through an intramembrane tunnel. The chain is Potassium-transporting ATPase potassium-binding subunit from Salmonella dublin (strain CT_02021853).